Reading from the N-terminus, the 1407-residue chain is DNA-directed RNA polymerase subunit beta' (1407 aa).

C70, C72, C85, and C88 together coordinate Zn(2+). The Mg(2+) site is built by D460, D462, and D464. Positions 814, 888, 895, and 898 each coordinate Zn(2+). Residue K972 is modified to N6-acetyllysine.

This sequence belongs to the RNA polymerase beta' chain family. As to quaternary structure, the RNAP catalytic core consists of 2 alpha, 1 beta, 1 beta' and 1 omega subunit. When a sigma factor is associated with the core the holoenzyme is formed, which can initiate transcription. Mg(2+) is required as a cofactor. It depends on Zn(2+) as a cofactor.

The enzyme catalyses RNA(n) + a ribonucleoside 5'-triphosphate = RNA(n+1) + diphosphate. Its function is as follows. DNA-dependent RNA polymerase catalyzes the transcription of DNA into RNA using the four ribonucleoside triphosphates as substrates. This Shigella flexneri serotype 5b (strain 8401) protein is DNA-directed RNA polymerase subunit beta'.